The primary structure comprises 424 residues: Formyl-CoA:oxalate CoA-transferase (424 aa).

CoA-binding positions include Q17 to S18, R38, N96 to A98, R104, and K136 to E139. The Nucleophile role is filled by D168. G247 to Q249 is a substrate binding site.

This sequence belongs to the CoA-transferase III family. Frc subfamily. Homodimer.

It catalyses the reaction formyl-CoA + oxalate = oxalyl-CoA + formate. It functions in the pathway metabolic intermediate degradation; oxalate degradation; CO(2) and formate from oxalate: step 1/2. Its function is as follows. Involved in the catabolism of oxalate and in the adapatation to low pH via the induction of the oxalate-dependent acid tolerance response (ATR). Catalyzes the transfer of the CoA moiety from formyl-CoA to oxalate. The chain is Formyl-CoA:oxalate CoA-transferase from Afipia carboxidovorans (strain ATCC 49405 / DSM 1227 / KCTC 32145 / OM5) (Oligotropha carboxidovorans).